We begin with the raw amino-acid sequence, 435 residues long: MFSPDTNSEFYDDFYTKYNTNMAPTTSTFNAQPRLSLDSGLGLTNDSFYSTDLNETHLMDISAGNASTSFQSQPPPQLESSPPTKWARIRTPPNRKKKISHEGPNQEALPPGFNLFSPPSRKKIKTAFSSPPPKSMKTPDSLRKSIRISSPSPFKVTFSKTPLKLSNNENVTGIHIGRSGTYYNKQVTGSASKRCLLPSKPDGFTFLGSPGNSDVLDFPLQTTFEGFGDLDTPAKINAALEVNNDDSMDYYQYAGMIETSSSLATYTNSTGPLVENHARNLKSVPISRTASRNLMKISRKSVEEPVPEPQAVHVEPVIEKPTKISAKKEKEQKKSAAKEAALKEAKEKEMRIWKLAPFETPKKEVPLYSGRWLVISTGRTLAQQELFSDAKSFFKANPPPAPRAPQAPELASGPRRIPTIQRVTLFKHRYRSPRD.

Residues 65-146 (NASTSFQSQP…KTPDSLRKSI (82 aa)) are disordered. A coiled-coil region spans residues 322 to 352 (TKISAKKEKEQKKSAAKEAALKEAKEKEMRI). A disordered region spans residues 393-419 (FFKANPPPAPRAPQAPELASGPRRIPT).

In terms of tissue distribution, strongly expressed in the cytoplasm of the pharynx muscle cells and several head neurons, probably the IL1s or IL2s, throughout development. Also expressed in some other unidentified neurons in the tail region. Weakly expressed in the nuclei of the T-cells and the T-cell daughters. Not expressed in gonads and in P12 cell.

It localises to the nucleus. The protein resides in the cytoplasm. May act synergistically with the Wnt pathways to control T-cell fate specification, gonad development, and P12 cell fate specification. Required for the distribution of pop-1 and tlp-1 proteins. The protein is T-cell defective protein 2 (tcl-2) of Caenorhabditis elegans.